Here is a 170-residue protein sequence, read N- to C-terminus: Transmembrane protein 252 (170 aa).

2 helical membrane-spanning segments follow: residues 8-28 and 40-60; these read ILCA…AFFI and LIAA…GIFW. Positions 112 to 147 are disordered; that stretch reads CPAEREASGIPPPLYTETGLEFQDGNDSHPEAPPSY.

The protein localises to the membrane. This chain is Transmembrane protein 252 (TMEM252), found in Homo sapiens (Human).